A 135-amino-acid chain; its full sequence is ATP synthase epsilon chain, chloroplastic (135 aa).

The protein belongs to the ATPase epsilon chain family. As to quaternary structure, F-type ATPases have 2 components, CF(1) - the catalytic core - and CF(0) - the membrane proton channel. CF(1) has five subunits: alpha(3), beta(3), gamma(1), delta(1), epsilon(1). CF(0) has three main subunits: a, b and c.

The protein resides in the plastid. It localises to the chloroplast thylakoid membrane. Its function is as follows. Produces ATP from ADP in the presence of a proton gradient across the membrane. This chain is ATP synthase epsilon chain, chloroplastic, found in Stigeoclonium helveticum (Green alga).